Consider the following 231-residue polypeptide: Large ribosomal subunit protein uL1 (231 aa).

It belongs to the universal ribosomal protein uL1 family. As to quaternary structure, part of the 50S ribosomal subunit.

Binds directly to 23S rRNA. The L1 stalk is quite mobile in the ribosome, and is involved in E site tRNA release. Functionally, protein L1 is also a translational repressor protein, it controls the translation of the L11 operon by binding to its mRNA. The polypeptide is Large ribosomal subunit protein uL1 (Acinetobacter baumannii (strain AB307-0294)).